Here is a 199-residue protein sequence, read N- to C-terminus: Transgelin-3 (199 aa).

In terms of domain architecture, Calponin-homology (CH) spans 24–136 (ADLENKLVDW…RTLMALGSVA (113 aa)). Phosphoserine is present on serine 163. One copy of the Calponin-like repeat lies at 174 to 199 (IGLQMGSNKGASQAGMTGYGMPRQIM). The span at 178 to 188 (MGSNKGASQAG) shows a compositional bias: polar residues. A disordered region spans residues 178–199 (MGSNKGASQAGMTGYGMPRQIM).

This sequence belongs to the calponin family. In terms of tissue distribution, abundant and ubiquitous expression in neurons.

The sequence is that of Transgelin-3 (Tagln3) from Rattus norvegicus (Rat).